Here is an 844-residue protein sequence, read N- to C-terminus: DNA mismatch repair protein MutS (844 aa).

G610–S617 is a binding site for ATP.

This sequence belongs to the DNA mismatch repair MutS family.

This protein is involved in the repair of mismatches in DNA. It is possible that it carries out the mismatch recognition step. This protein has a weak ATPase activity. This Francisella tularensis subsp. holarctica (strain FTNF002-00 / FTA) protein is DNA mismatch repair protein MutS.